A 641-amino-acid polypeptide reads, in one-letter code: Serine/threonine-protein kinase PK-1 (641 aa).

In terms of domain architecture, Protein kinase spans 18–280 (YRVDARIAVG…ARARDARARL (263 aa)). ATP is bound by residues 24–32 (IAVGGMATV) and Lys-47. Asp-141 (proton acceptor) is an active-site residue. Positions 317-347 (LPVNEEDEGADAAHRTSRFRSPPPLPPRGRT) are disordered. 4 PASTA domains span residues 375 to 441 (SGQF…TLSK), 442 to 508 (GPRT…LTVS), 509 to 576 (KGAP…TLSK), and 577 to 641 (GPEM…IEIR). A disordered region spans residues 469-494 (KPGMSTREFSDSVPAGSVISTEPGKG).

Belongs to the protein kinase superfamily. Ser/Thr protein kinase family. Post-translationally, autophosphorylated on threonine residue(s).

The catalysed reaction is L-seryl-[protein] + ATP = O-phospho-L-seryl-[protein] + ADP + H(+). It catalyses the reaction L-threonyl-[protein] + ATP = O-phospho-L-threonyl-[protein] + ADP + H(+). This Streptomyces toyocaensis protein is Serine/threonine-protein kinase PK-1 (spk1).